The sequence spans 674 residues: Kinesin-like protein KIFC1 (674 aa).

3 positions are modified to phosphoserine: serine 28, serine 33, and serine 35. Residues 66–96 (TSRPRGPLLSTVSQTQGHTAAQKGPKKTGPR) are disordered. The segment covering 75–84 (STVSQTQGHT) has biased composition (polar residues). The stretch at 146–315 (DLNEELKRYR…QELKGNIRVF (170 aa)) forms a coiled coil. In terms of domain architecture, Kinesin motor spans 311–664 (NIRVFCRVRP…LRFASKVNQC (354 aa)). Positions 327 to 366 (TPSPGFLVFPPGPAGPSDPPTGLSLSRSDDRRSTLTGAPA) are disordered. Over residues 336–345 (PPGPAGPSDP) the composition is skewed to pro residues. Threonine 360 is subject to Phosphothreonine. 411–418 (GQTGSGKT) provides a ligand contact to ATP.

The protein belongs to the TRAFAC class myosin-kinesin ATPase superfamily. Kinesin family. NCD subfamily. As to quaternary structure, binds NUBP1 and NUBP2. Interacts with PPP1R42. In terms of tissue distribution, highly expressed in 14 dpc embryos, spleen and NIH3T3 cells. Also expressed in testis, brain, lung, kidney and cultured astrocytes. Very low levels in skeletal muscle and heart.

The protein localises to the nucleus. Its subcellular location is the cytoplasm. It is found in the cytoskeleton. It localises to the microtubule organizing center. The protein resides in the centrosome. The protein localises to the spindle. Its subcellular location is the early endosome. In terms of biological role, minus end-directed microtubule-dependent motor required for bipolar spindle formation. May contribute to movement of early endocytic vesicles. Regulates cilium formation and structure. This chain is Kinesin-like protein KIFC1, found in Mus musculus (Mouse).